We begin with the raw amino-acid sequence, 42 residues long: Serine protease inhibitor 8 (42 aa).

This sequence belongs to the protease inhibitor I3 (leguminous Kunitz-type inhibitor) family. As to expression, cortex of potato tuber.

In terms of biological role, potent inhibitor of animal pancreatic trypsin (serine protease). This Solanum tuberosum (Potato) protein is Serine protease inhibitor 8.